Here is a 451-residue protein sequence, read N- to C-terminus: GTPase Der (451 aa).

2 consecutive EngA-type G domains span residues 5–170 (PVVA…VEPE) and 186–359 (IKLA…AAAF). Residues 11 to 18 (GRPNVGKS), 58 to 62 (DTGGF), 122 to 125 (NKAE), 192 to 199 (GRPNVGKS), 239 to 243 (DTAGL), and 304 to 307 (NKWD) each bind GTP. In terms of domain architecture, KH-like spans 360–444 (AKLSTPKLTR…PLRIEFKSSR (85 aa)).

It belongs to the TRAFAC class TrmE-Era-EngA-EngB-Septin-like GTPase superfamily. EngA (Der) GTPase family. In terms of assembly, associates with the 50S ribosomal subunit.

Functionally, GTPase that plays an essential role in the late steps of ribosome biogenesis. The protein is GTPase Der of Bordetella petrii (strain ATCC BAA-461 / DSM 12804 / CCUG 43448).